The sequence spans 346 residues: fMet-Leu-Phe receptor (346 aa).

N-linked (GlcNAc...) asparagine glycans are attached at residues Asn1 and Asn7. Residues 1-24 lie on the Extracellular side of the membrane; that stretch reads NSSLPTNISGGTPAVSAGYLFLDI. The chain crosses the membrane as a helical span at residues 25-47; it reads ITYLVFAVTFVLGVLGNGLVIWV. Residues 48-58 lie on the Cytoplasmic side of the membrane; that stretch reads AGFRMTHTVTT. A helical membrane pass occupies residues 59–80; that stretch reads ISYLNLAVADFCFTSTLPFFMV. Over 81–97 the chain is Extracellular; the sequence is RKAMGGHWPFGWFLCKF. A disulfide bridge connects residues Cys95 and Cys173. A helical transmembrane segment spans residues 98 to 118; it reads IFTIVDINLFGSVFLIALIAL. The Cytoplasmic segment spans residues 119 to 137; sequence DRCVCVLHPVWTQNHRTVS. A helical transmembrane segment spans residues 138-159; it reads LAKKVIIGPWVMALLLTLPVII. Over 160–202 the chain is Extracellular; that stretch reads RVTTVPGKTGTVACTFNFSPWTNDPKERINVAIAMLTVRGIIR. Residues 203 to 223 form a helical membrane-spanning segment; the sequence is FIIGFSAPMSIVAVSYGLIAT. At 224–239 the chain is on the cytoplasmic side; it reads KIHKQGLIKFSRPLRV. A helical membrane pass occupies residues 240 to 263; the sequence is LSFVAAAFFLCWSPYQVVALIATV. Over 264 to 282 the chain is Extracellular; it reads RIRELLQGMYKEIGIAVDV. Residues 283–302 form a helical membrane-spanning segment; it reads TSALAFFNSCLNPMLYVFMG. Residues 303–346 lie on the Cytoplasmic side of the membrane; the sequence is QDFRERLIHALPASLERALTEDSTQTSDTATNSTLPSAEVALQA. The segment at 322–346 is disordered; the sequence is TEDSTQTSDTATNSTLPSAEVALQA. A compositionally biased stretch (polar residues) spans 323–338; it reads EDSTQTSDTATNSTLP.

The protein belongs to the G-protein coupled receptor 1 family. In terms of processing, phosphorylated; which is necessary for desensitization.

It is found in the cell membrane. Functionally, high affinity receptor for N-formyl-methionyl peptides (fMLP), which are powerful neutrophil chemotactic factors. Binding of fMLP to the receptor stimulates intracellular calcium mobilization and superoxide anion release. This response is mediated via a G-protein that activates a phosphatidylinositol-calcium second messenger system. Receptor for TAFA4, mediates its effects on chemoattracting macrophages, promoting phagocytosis and increasing ROS release. Receptor for cathepsin CTSG, leading to increased phagocyte chemotaxis. The chain is fMet-Leu-Phe receptor (FPR1) from Pan troglodytes (Chimpanzee).